The following is a 156-amino-acid chain: Transcription antitermination protein NusB (156 aa).

This sequence belongs to the NusB family.

In terms of biological role, involved in transcription antitermination. Required for transcription of ribosomal RNA (rRNA) genes. Binds specifically to the boxA antiterminator sequence of the ribosomal RNA (rrn) operons. In Bartonella tribocorum (strain CIP 105476 / IBS 506), this protein is Transcription antitermination protein NusB.